Consider the following 141-residue polypeptide: Putative pre-16S rRNA nuclease (141 aa).

Belongs to the YqgF nuclease family.

It is found in the cytoplasm. Could be a nuclease involved in processing of the 5'-end of pre-16S rRNA. This Aliivibrio salmonicida (strain LFI1238) (Vibrio salmonicida (strain LFI1238)) protein is Putative pre-16S rRNA nuclease.